Here is a 116-residue protein sequence, read N- to C-terminus: Omega-ctenitoxin-Pn3a (116 aa).

Positions 1-19 are cleaved as a signal peptide; the sequence is MKMKLLGIILLVSFPFVLG. The propeptide occupies 20-38; sequence FAGIPIEEGENSVEVGEVE. 7 cysteine pairs are disulfide-bonded: C41-C58, C48-C64, C55-C90, C57-C78, C66-C76, C96-C102, and C106-C111. H115 is subject to Histidine amide.

Belongs to the neurotoxin 04 (omega-agtx) family. 03 (type II/III omega-agtx) subfamily. Expressed by the venom gland.

It is found in the secreted. This toxin is a potent and practically irreversible antagonist of both Cav2.1/CACNA1A and Cav2.2/CACNA1B calcium channels, while it displays a partial and rapidly reversible block of Cav2.3/CACNA1E calcium channels and no effect on Cav3/CACNA1 calcium channels. Inhibits glutamate uptake from rat brain synaptosomes by an interaction between cysteines from both glutamate transporter and toxin. Blocks potassium-induced exocytosis of synaptic vesicles in brain cortical synaptosomes (IC(50)=1.1 nM). In rat brain, inhibits glutamate release, neuronal death and loss of neurotransmission in the hippocampus resulting from ischemia. In vivo, induces rapid general flaccid paralysis followed by death in 10-30 minutes at dose levels of 5 ug per mouse. The sequence is that of Omega-ctenitoxin-Pn3a from Phoneutria nigriventer (Brazilian armed spider).